Here is a 610-residue protein sequence, read N- to C-terminus: Fimbrin (610 aa).

EF-hand domains lie at S7–K42 and V43–H78. Ca(2+) is bound by residues D20, N22, D24, Q26, E31, D56, D58, N60, S62, and E67. Actin-binding stretches follow at residues Y102–P365 and A366–M608. 4 consecutive Calponin-homology (CH) domains span residues D116–L232, L260–P365, T379–V488, and P501–M608.

Its function is as follows. Binds to actin. This is Fimbrin (fimA) from Dictyostelium discoideum (Social amoeba).